The following is a 144-amino-acid chain: Large ribosomal subunit protein uL15 (144 aa).

The segment at 1-57 (MELNNLKPAEGSKHAKRRVGRGIGSGLGKTAGRGHKGQKSRSGGFHKVGFEGGQMPL) is disordered. Residues 21–31 (RGIGSGLGKTA) show a composition bias toward gly residues.

This sequence belongs to the universal ribosomal protein uL15 family. In terms of assembly, part of the 50S ribosomal subunit.

Binds to the 23S rRNA. The polypeptide is Large ribosomal subunit protein uL15 (Paraburkholderia phytofirmans (strain DSM 17436 / LMG 22146 / PsJN) (Burkholderia phytofirmans)).